The chain runs to 675 residues: Glycerophosphocholine phosphodiesterase GPCPD1 (675 aa).

One can recognise a CBM20 domain in the interval 1 to 115 (MTPSQVTFEI…IIIDDGQFGI (115 aa)). Residues Arg-70 and 88-89 (HK) contribute to the substrate site. Phosphoserine occurs at positions 178 and 427. The GP-PDE domain maps to 321 to 621 (PLDVGHRGAG…DRIYDWMPEQ (301 aa)). A Phosphotyrosine modification is found at Tyr-611.

This sequence belongs to the glycerophosphoryl diester phosphodiesterase family. Widely expressed with highest levels in skeletal muscle and heart.

The protein localises to the cytoplasm. It localises to the cytosol. The enzyme catalyses sn-glycerol 3-phosphocholine + H2O = sn-glycerol 3-phosphate + choline + H(+). May be involved in the negative regulation of skeletal muscle differentiation, independently of its glycerophosphocholine phosphodiesterase activity. This is Glycerophosphocholine phosphodiesterase GPCPD1 (Gpcpd1) from Mus musculus (Mouse).